Reading from the N-terminus, the 689-residue chain is MTQQTFLVEIGTEELPPKALRSLAESFAANFTAELNNANLPYGEVIWYAAPRRLALKVTNLSATQADREVEKRGPAIAQAFDAEGKPSKAAEGWARGCGITVDQAERLVTDKGEWLLYRAHVKGQSAQLLLAGMVNTALSKLPIPKLMRWGDKDTQFVRPVHTVTMLLGSEVIPGTVLGIDSDRIIRGHRFMGEPEFTLDNADQYPQVLQERGKVIADYELRKAIIKRDAELAAQKIGGVADLSESLLEEVASLVEWPVVLTAKFEEKFLAVPAEALVYTMKGDQKYFPVYDTAGNLLPNFIFVANIESKDPQQIISGNEKVVRPRLADAEFFFKTDRKKRLEDNLPRLETVLFQQQLGTLRDKTDRIQALAGWVAAQIGADVNHATRAGLLSKCDLMTNMVFEFTDTQGVMGMHYARHDGEAEDVAVALNEQYQPRFAGDDLPSNPVACALAIADKMDTLAGIFGIGQHPKGDKDPFALRRAALGVLRIIVEKNLPLDLQTLTEEAVRLYGSKLTNTKVVDEVIEFMLGRFRAWYQDEGHSVDTIQAVLARRPTRPADFDARVKAVTYFRTLDAAAALAAANKRVSNILAKSTDKLNDHVRASVLKEPAELKLATHLVVLRDKLEPVFAAGQYQEALVELAALRETVDEFFESVMVMDEDDAVRVNRLTLLSKLRELFLQVADISLLQ.

Belongs to the class-II aminoacyl-tRNA synthetase family. Tetramer of two alpha and two beta subunits.

Its subcellular location is the cytoplasm. The catalysed reaction is tRNA(Gly) + glycine + ATP = glycyl-tRNA(Gly) + AMP + diphosphate. This chain is Glycine--tRNA ligase beta subunit, found in Yersinia enterocolitica serotype O:8 / biotype 1B (strain NCTC 13174 / 8081).